Reading from the N-terminus, the 297-residue chain is Formylmethanofuran--tetrahydromethanopterin formyltransferase (297 aa).

This sequence belongs to the FTR family. Homotetramer.

The protein resides in the cytoplasm. The catalysed reaction is N-formylmethanofuran + 5,6,7,8-tetrahydromethanopterin + H(+) = N(5)-formyl-5,6,7,8-tetrahydromethanopterin + methanofuran. Its pathway is one-carbon metabolism; methanogenesis from CO(2); 5,10-methenyl-5,6,7,8-tetrahydromethanopterin from CO(2): step 2/3. In terms of biological role, catalyzes the reversible transfer of a formyl group from formylmethanofuran (formyl-MFR) to tetrahydromethanopterin (H(4)MPT) to produce 5-formyl tetrahydromethanopterin (5-formyl-H(4)MPT) and methanofuran (MFR). This chain is Formylmethanofuran--tetrahydromethanopterin formyltransferase, found in Methanosarcina acetivorans (strain ATCC 35395 / DSM 2834 / JCM 12185 / C2A).